The following is a 263-amino-acid chain: Shikimate dehydrogenase (NADP(+)) (263 aa).

Residues 14-16 (SLS) and threonine 60 each bind shikimate. Lysine 64 serves as the catalytic Proton acceptor. Positions 85 and 100 each coordinate shikimate. NADP(+) is bound by residues 123-127 (GAGGA), 146-151 (NRTPQR), and leucine 205. Tyrosine 207 serves as a coordination point for shikimate. Glycine 228 contacts NADP(+).

This sequence belongs to the shikimate dehydrogenase family. Homodimer.

It carries out the reaction shikimate + NADP(+) = 3-dehydroshikimate + NADPH + H(+). The protein operates within metabolic intermediate biosynthesis; chorismate biosynthesis; chorismate from D-erythrose 4-phosphate and phosphoenolpyruvate: step 4/7. In terms of biological role, involved in the biosynthesis of the chorismate, which leads to the biosynthesis of aromatic amino acids. Catalyzes the reversible NADPH linked reduction of 3-dehydroshikimate (DHSA) to yield shikimate (SA). This Thermus thermophilus (strain ATCC BAA-163 / DSM 7039 / HB27) protein is Shikimate dehydrogenase (NADP(+)).